Consider the following 907-residue polypeptide: Leucine-rich repeat-containing G-protein coupled receptor 5 (907 aa).

Residues 1–21 (MDTSCVHMLLSLLALLQLVAA) form the signal peptide. Topologically, residues 22-561 (GSSPGPDAIP…EHLFGSWLIR (540 aa)) are extracellular. The region spanning 25 to 66 (PGPDAIPRGCPSHCHCELDGRMLLRVDCSDLGLSELPSNLSV) is the LRRNT domain. Intrachain disulfides connect Cys-34-Cys-40 and Cys-38-Cys-52. N-linked (GlcNAc...) asparagine glycans are attached at residues Asn-63 and Asn-77. LRR repeat units follow at residues 67–88 (FTSY…LLHR), 91–112 (FLEE…AFTG), 115–136 (SLKV…ALQN), 139–160 (SLQS…CFSG), 163–184 (SLRH…AFRS), 187–208 (ALQA…AFGN), 211–232 (SLVV…CFDG), 235–256 (SLET…IKTL), 258–279 (NLKE…AFVG), 282–303 (SLIT…AFQH), 306–325 (ELRT…PHLT), 329–350 (TLES…VCDQ), 353–374 (NLQV…SGCQ), 375–396 (KLQK…TFQQ), 399–420 (NLRS…AFST), and 423–446 (SLIK…HGLT). The N-linked (GlcNAc...) asparagine glycan is linked to Asn-208. Cys-348 and Cys-373 are oxidised to a cystine. Cys-479 and Cys-541 form a disulfide bridge. Residues 562–582 (IGVWTTAVLALSCNALVALTV) traverse the membrane as a helical segment. The Cytoplasmic portion of the chain corresponds to 583-593 (FRTPLYISSIK). Residues 594-614 (LLIGVIAVVDILMGVSSAVLA) form a helical membrane-spanning segment. Topologically, residues 615-638 (AVDAFTFGRFAQHGAWWEDGIGCQ) are extracellular. Cys-637 and Cys-712 form a disulfide bridge. The chain crosses the membrane as a helical span at residues 639 to 659 (IVGFLSIFASESSIFLLTLAA). The Cytoplasmic segment spans residues 660–682 (LERGFSVKCSSKFEVKAPLFSLR). The chain crosses the membrane as a helical span at residues 683-703 (AIVLLCVLLALTIATIPLLGG). Residues 704 to 723 (SKYNASPLCLPLPFGEPSTT) are Extracellular-facing. The chain crosses the membrane as a helical span at residues 724 to 744 (GYMVALVLLNSLCFLIMTIAY). Topologically, residues 745 to 767 (TKLYCSLEKGELENLWDCSMVKH) are cytoplasmic. A helical transmembrane segment spans residues 768–788 (IALLLFANCILYCPVAFLSFS). The Extracellular portion of the chain corresponds to 789-802 (SLLNLTFISPDVIK). A glycan (N-linked (GlcNAc...) asparagine) is linked at Asn-792. A helical membrane pass occupies residues 803-823 (FILLVIVPLPSCLNPLLYIVF). Over 824 to 907 (NPHFKEDMGS…LSSVAFVPCL (84 aa)) the chain is Cytoplasmic.

The protein belongs to the G-protein coupled receptor 1 family. As to quaternary structure, identified in a complex composed of RNF43, LGR5 and RSPO1. Also interacts with other R-spondin ligands, including RSPO2, RSPO3 and RSPO4. In terms of tissue distribution, expressed in the intestinal epithelium (at protein level). Expressed in the gonads, the adrenal gland, and in the brain. In the central nervous system expression is restricted to the olfactory bulb. In the adrenal gland detected only in the neural-crest derived chromaffin cells of the medulla, but not in the cells of the adrenal cortex. In the gonads, the expression is high in Graafian follicle, but absent from primary and secondary follicles. In the intestine, exclusively expressed in cycling crypt base columnar cells. Expressed in the lower bulge and secondary germ area of telogen hair follicles and in the lower outer root sheath of anagen hair follicle.

The protein localises to the cell membrane. Its subcellular location is the golgi apparatus. The protein resides in the trans-Golgi network membrane. In terms of biological role, receptor for R-spondins that potentiates the canonical Wnt signaling pathway and acts as a stem cell marker of the intestinal epithelium and the hair follicle. Upon binding to R-spondins (RSPO1, RSPO2, RSPO3 or RSPO4), associates with phosphorylated LRP6 and frizzled receptors that are activated by extracellular Wnt receptors, triggering the canonical Wnt signaling pathway to increase expression of target genes. In contrast to classical G-protein coupled receptors, does not activate heterotrimeric G-proteins to transduce the signal. Involved in the development and/or maintenance of the adult intestinal stem cells during postembryonic development. The chain is Leucine-rich repeat-containing G-protein coupled receptor 5 (Lgr5) from Mus musculus (Mouse).